Here is a 101-residue protein sequence, read N- to C-terminus: MEAKFFCFLEIIGVGYKASTNAQGSILYLKLGFSHEIRLQVTPSVRVFCLKPNLICCTGMDHQKVTQFAAIVKSCKPPEVYKGKGIQYRNEIIHKKQGKKK.

The protein belongs to the universal ribosomal protein uL6 family.

The protein localises to the mitochondrion. The polypeptide is Large ribosomal subunit protein uL6m (RPL6) (Marchantia polymorpha (Common liverwort)).